The following is a 241-amino-acid chain: MTALPAASITSSAFDDLDALNAQLEGLHADQRVAWALQHGPQNAALSSSFGAQSAVTLHLLSQQRPDIPVILIDTGYLFPETYRFADALTERLKLNLKVYRPLVSRAWMEARHGRLWEQGMVGIDQYNNLRKVEPMRRALDELEVGTWFTGLRRSQSGGRAQTPIVQKRGERYKISPIADWTDRDVWQYLQAHDLPYHPLWEQGYVSIGDFHTTRRWEPGMREEDTRFFGLKRECGIHEDI.

The active-site Nucleophile; cysteine thiosulfonate intermediate is Cys-235.

The protein belongs to the PAPS reductase family. CysH subfamily.

It localises to the cytoplasm. It catalyses the reaction [thioredoxin]-disulfide + sulfite + adenosine 3',5'-bisphosphate + 2 H(+) = [thioredoxin]-dithiol + 3'-phosphoadenylyl sulfate. The protein operates within sulfur metabolism; hydrogen sulfide biosynthesis; sulfite from sulfate: step 3/3. Catalyzes the formation of sulfite from phosphoadenosine 5'-phosphosulfate (PAPS) using thioredoxin as an electron donor. This is Phosphoadenosine 5'-phosphosulfate reductase from Xanthomonas euvesicatoria pv. vesicatoria (strain 85-10) (Xanthomonas campestris pv. vesicatoria).